A 370-amino-acid polypeptide reads, in one-letter code: Sodium-dependent organic anion transporter (370 aa).

The interval 1–24 (MSADCEGNSTCPANSTEEDPPVGM) is disordered. Residues 1–32 (MSADCEGNSTCPANSTEEDPPVGMEGQGSLKL) lie on the Extracellular side of the membrane. Residues N8 and N14 are each glycosylated (N-linked (GlcNAc...) asparagine). The chain crosses the membrane as a helical span at residues 33–53 (VFTVLSAVMVGLVMFSFGCSV). Residues 54 to 67 (ESRKLWLHLRRPWG) are Cytoplasmic-facing. Residues 68–88 (IAVGLLCQFGLMPLTAYLLAI) form a helical membrane-spanning segment. Topologically, residues 89-97 (GFGLKPFQA) are extracellular. The helical transmembrane segment at 98–118 (IAVLIMGSCPGGTVSNVLTFW) threads the bilayer. Topologically, residues 119–126 (VDGDMDLS) are cytoplasmic. Residues 127 to 147 (ISMTTCSTVAALGMMPLCLYV) form a helical membrane-spanning segment. Topologically, residues 148 to 159 (YTRSWTLPQSLT) are extracellular. The helical transmembrane segment at 160-180 (IPYQSIGITLVSLVVPVASGI) threads the bilayer. At 181-195 (YVNYRWPKQATFILK) the chain is on the cytoplasmic side. Residues 196-216 (VGAAVGGMLLLVVAVTGVVLA) traverse the membrane as a helical segment. Topologically, residues 217–224 (KGWNIDVT) are extracellular. Residues 225–245 (LLVISCIFPLVGHVMGFLLAF) form a helical membrane-spanning segment. Topologically, residues 246 to 265 (LTHQSWQRCRTISIETGAQN) are cytoplasmic. Residues 266-283 (IQLCIAMMQLSFSAEYLV) form a helical membrane-spanning segment. Residue Q284 is a topological domain, extracellular. A helical membrane pass occupies residues 285–305 (LLNFALAYGLFQVLHGLLIVA). Over 306–370 (AYQAYKRRQK…ELTSHVPSCE (65 aa)) the chain is Cytoplasmic.

This sequence belongs to the bile acid:sodium symporter (BASS) (TC 2.A.28) family. Glycosylated. Highly expressed in heart, lung, spleen and adrenal gland. Moderately expressed in skeletal muscle, testis and small intestine.

The protein localises to the membrane. The catalysed reaction is estrone 3-sulfate(out) + 2 Na(+)(out) = estrone 3-sulfate(in) + 2 Na(+)(in). It catalyses the reaction 17beta-estradiol 3-sulfate(out) + 2 Na(+)(out) = 17beta-estradiol 3-sulfate(in) + 2 Na(+)(in). The enzyme catalyses dehydroepiandrosterone 3-sulfate(out) + 2 Na(+)(out) = dehydroepiandrosterone 3-sulfate(in) + 2 Na(+)(in). It carries out the reaction androst-5-ene-diol 3-sulfate(out) + 2 Na(+)(out) = androst-5-ene-diol 3-sulfate(in) + 2 Na(+)(in). The catalysed reaction is pregnenolone sulfate(out) + 2 Na(+)(out) = pregnenolone sulfate(in) + 2 Na(+)(in). It catalyses the reaction taurolithocholate 3-sulfate(out) + 2 Na(+)(out) = taurolithocholate 3-sulfate(in) + 2 Na(+)(in). The enzyme catalyses androsterone 3alpha-sulfate(out) + 2 Na(+)(out) = androsterone 3alpha-sulfate(in) + 2 Na(+)(in). It carries out the reaction 5alpha-dihydrotestosterone sulfate(out) + 2 Na(+)(out) = 5alpha-dihydrotestosterone sulfate(in) + 2 Na(+)(in). The catalysed reaction is 17beta-estradiol 17-sulfate(out) + 2 Na(+)(out) = 17beta-estradiol 17-sulfate(in) + 2 Na(+)(in). It catalyses the reaction 17alpha-hydroxypregnenolone 3-sulfate(out) + 2 Na(+)(out) = 17alpha-hydroxypregnenolone 3-sulfate(in) + 2 Na(+)(in). The enzyme catalyses epiandrosterone 3-sulfate(out) + 2 Na(+)(out) = epiandrosterone 3-sulfate(in) + 2 Na(+)(in). It carries out the reaction epitestosterone 17-sulfate(out) + 2 Na(+)(out) = epitestosterone 17-sulfate(in) + 2 Na(+)(in). The catalysed reaction is testosterone 17-sulfate(out) + 2 Na(+)(out) = testosterone 17-sulfate(in) + 2 Na(+)(in). It catalyses the reaction 16alpha-hydroxydehydroepiandrosterone 3-sulfate(out) + 2 Na(+)(out) = 16alpha-hydroxydehydroepiandrosterone 3-sulfate(in) + 2 Na(+)(in). In terms of biological role, transports sulfoconjugated steroid hormones from the extracellular compartment into the cytosol in a sodium-dependent manner without hydrolysis. Steroid sulfate hormones are commonly considered to be biologically inactive metabolites, that may be activated by steroid sulfatases into free steroids. May play an important role by delivering sulfoconjugated steroids to specific target cells in reproductive organs. May play a role transporting the estriol precursor 16alpha-hydroxydehydroepiandrosterone 3-sulfate (16a-OH-DHEAS) at the fetal blood vessel endothelium. Can also transport other sulfoconjugated molecules such as taurolithocholic acid-3-sulfate and sulfoconjugated pyrenes. The protein is Sodium-dependent organic anion transporter (Slc10a6) of Rattus norvegicus (Rat).